We begin with the raw amino-acid sequence, 124 residues long: Calvin cycle protein CP12-1, chloroplastic (124 aa).

The N-terminal 47 residues, 1–47 (MTTIAAAGLNVATPRVVVRPVARVLGPVRLNYPWKFGSMKRMVVVKA), are a transit peptide targeting the chloroplast. 2 disulfides stabilise this stretch: cysteine 68/cysteine 77 and cysteine 110/cysteine 119. The tract at residues 90-124 (AASHARDKKKAGGSDPLEEYCNDNPETDECRTYDN) is disordered. Residues 105–116 (PLEEYCNDNPET) are compositionally biased toward acidic residues.

It belongs to the CP12 family. Monomer. Component of a complex that contains two dimers of PRK, two tetramers of GAPDH and CP12. CP12 associates with GAPDH, causing its conformation to change. This GAPDH/CP12 complex binds PRK to form a half-complex (one unit). This unit probably dimerizes due partially to interactions between the enzymes of each unit. In terms of processing, contains two disulfide bonds; only the oxidized protein, with two disulfide bonds, is active in complex formation. The C-terminal disulfide is involved in the interaction with GAPDH and the N-terminal disulfide mediates the binding of PRK with this binary complex. In terms of tissue distribution, mostly expressed in flowers, hypocotyl, cotyledons, leaves, stems, and flower stalks. Barely detectable in roots and siliques. Present in root tips and lateral roots. Accumulates in the cotyledons of etiolated seedlings.

The protein resides in the plastid. It is found in the chloroplast. Functionally, acts as a linker essential in the assembly of a core complex of PRK/GAPDH. Coordinates the reversible inactivation of chloroplast enzymes GAPDH and PRK during darkness in photosynthetic tissues. This is Calvin cycle protein CP12-1, chloroplastic (CP12-1) from Arabidopsis thaliana (Mouse-ear cress).